A 442-amino-acid polypeptide reads, in one-letter code: Ribosomal protein uS12 methylthiotransferase RimO (442 aa).

One can recognise an MTTase N-terminal domain in the interval 8–118 (PKVGFVSLGC…VLGHVHKYVE (111 aa)). Residues Cys17, Cys53, Cys82, Cys150, Cys154, and Cys157 each coordinate [4Fe-4S] cluster. One can recognise a Radical SAM core domain in the interval 136-373 (LTPRHYAYLK…MELQQQVSIR (238 aa)). The TRAM domain occupies 376–442 (ARKVGKEMLV…EYDLWASLID (67 aa)).

Belongs to the methylthiotransferase family. RimO subfamily. [4Fe-4S] cluster serves as cofactor.

Its subcellular location is the cytoplasm. The enzyme catalyses L-aspartate(89)-[ribosomal protein uS12]-hydrogen + (sulfur carrier)-SH + AH2 + 2 S-adenosyl-L-methionine = 3-methylsulfanyl-L-aspartate(89)-[ribosomal protein uS12]-hydrogen + (sulfur carrier)-H + 5'-deoxyadenosine + L-methionine + A + S-adenosyl-L-homocysteine + 2 H(+). Functionally, catalyzes the methylthiolation of an aspartic acid residue of ribosomal protein uS12. The polypeptide is Ribosomal protein uS12 methylthiotransferase RimO (Aeromonas hydrophila subsp. hydrophila (strain ATCC 7966 / DSM 30187 / BCRC 13018 / CCUG 14551 / JCM 1027 / KCTC 2358 / NCIMB 9240 / NCTC 8049)).